The sequence spans 153 residues: Flagellar assembly factor FliW (153 aa).

Belongs to the FliW family. Interacts with translational regulator CsrA and flagellin(s).

The protein localises to the cytoplasm. Acts as an anti-CsrA protein, binds CsrA and prevents it from repressing translation of its target genes, one of which is flagellin. Binds to flagellin and participates in the assembly of the flagellum. This is Flagellar assembly factor FliW from Heliobacterium modesticaldum (strain ATCC 51547 / Ice1).